Consider the following 390-residue polypeptide: Tryptophan synthase beta chain 2 (390 aa).

An N6-(pyridoxal phosphate)lysine modification is found at lysine 83.

It belongs to the TrpB family. Tetramer of two alpha and two beta chains. Pyridoxal 5'-phosphate is required as a cofactor.

It carries out the reaction (1S,2R)-1-C-(indol-3-yl)glycerol 3-phosphate + L-serine = D-glyceraldehyde 3-phosphate + L-tryptophan + H2O. It functions in the pathway amino-acid biosynthesis; L-tryptophan biosynthesis; L-tryptophan from chorismate: step 5/5. Functionally, the beta subunit is responsible for the synthesis of L-tryptophan from indole and L-serine. This is Tryptophan synthase beta chain 2 (trpB2) from Methanothermobacter marburgensis (strain ATCC BAA-927 / DSM 2133 / JCM 14651 / NBRC 100331 / OCM 82 / Marburg) (Methanobacterium thermoautotrophicum).